A 474-amino-acid chain; its full sequence is Bifunctional protein HldE (474 aa).

Positions 1–318 (MKLSMPRFDQ…RAVQREQGSE (318 aa)) are ribokinase. Position 194–197 (194–197 (NLSE)) interacts with ATP. Residue D263 is part of the active site. The cytidylyltransferase stretch occupies residues 343-474 (FTNGCFDILH…AIVEKIRQKG (132 aa)).

This sequence in the N-terminal section; belongs to the carbohydrate kinase PfkB family. The protein in the C-terminal section; belongs to the cytidylyltransferase family. Homodimer.

It catalyses the reaction D-glycero-beta-D-manno-heptose 7-phosphate + ATP = D-glycero-beta-D-manno-heptose 1,7-bisphosphate + ADP + H(+). The enzyme catalyses D-glycero-beta-D-manno-heptose 1-phosphate + ATP + H(+) = ADP-D-glycero-beta-D-manno-heptose + diphosphate. It participates in nucleotide-sugar biosynthesis; ADP-L-glycero-beta-D-manno-heptose biosynthesis; ADP-L-glycero-beta-D-manno-heptose from D-glycero-beta-D-manno-heptose 7-phosphate: step 1/4. It functions in the pathway nucleotide-sugar biosynthesis; ADP-L-glycero-beta-D-manno-heptose biosynthesis; ADP-L-glycero-beta-D-manno-heptose from D-glycero-beta-D-manno-heptose 7-phosphate: step 3/4. In terms of biological role, catalyzes the phosphorylation of D-glycero-D-manno-heptose 7-phosphate at the C-1 position to selectively form D-glycero-beta-D-manno-heptose-1,7-bisphosphate. Functionally, catalyzes the ADP transfer from ATP to D-glycero-beta-D-manno-heptose 1-phosphate, yielding ADP-D-glycero-beta-D-manno-heptose. The sequence is that of Bifunctional protein HldE from Pseudomonas paraeruginosa (strain DSM 24068 / PA7) (Pseudomonas aeruginosa (strain PA7)).